The primary structure comprises 352 residues: tRNA pseudouridine synthase D (352 aa).

Residue Asp81 is the Nucleophile of the active site. Residues 157-303 enclose the TRUD domain; the sequence is GVPNYFGTQR…MDHERRILRL (147 aa).

It belongs to the pseudouridine synthase TruD family.

The catalysed reaction is uridine(13) in tRNA = pseudouridine(13) in tRNA. In terms of biological role, responsible for synthesis of pseudouridine from uracil-13 in transfer RNAs. This Pseudomonas putida (strain ATCC 47054 / DSM 6125 / CFBP 8728 / NCIMB 11950 / KT2440) protein is tRNA pseudouridine synthase D.